Consider the following 177-residue polypeptide: Large ribosomal subunit protein uL6 (177 aa).

It belongs to the universal ribosomal protein uL6 family. As to quaternary structure, part of the 50S ribosomal subunit.

In terms of biological role, this protein binds to the 23S rRNA, and is important in its secondary structure. It is located near the subunit interface in the base of the L7/L12 stalk, and near the tRNA binding site of the peptidyltransferase center. The protein is Large ribosomal subunit protein uL6 of Aliivibrio salmonicida (strain LFI1238) (Vibrio salmonicida (strain LFI1238)).